We begin with the raw amino-acid sequence, 507 residues long: Alkyl hydroperoxide reductase subunit F (507 aa).

207–222 contributes to the FAD binding site; it reads DVLIVGGGPASGSAAI. The cysteines at positions 335 and 338 are disulfide-linked. 347-361 is a binding site for NAD(+); sequence DVAVIGGGNSGVEAA. An FAD-binding site is contributed by 467-477; that stretch reads TNVPGIFAAGD.

Belongs to the class-II pyridine nucleotide-disulfide oxidoreductase family. Homodimer. Requires FAD as cofactor.

Serves to protect the cell against DNA damage by alkyl hydroperoxides. It can use either NADH or NADPH as electron donor for direct reduction of redox dyes or of alkyl hydroperoxides when combined with the AhpC protein. The protein is Alkyl hydroperoxide reductase subunit F (ahpF) of Staphylococcus aureus (strain MRSA252).